A 611-amino-acid polypeptide reads, in one-letter code: tRNA uridine 5-carboxymethylaminomethyl modification enzyme MnmG (611 aa).

An FAD-binding site is contributed by 14 to 19 (GAGHAG). 274-288 (GPRYCPSIEDKIVKF) contributes to the NAD(+) binding site.

This sequence belongs to the MnmG family. As to quaternary structure, homodimer. Heterotetramer of two MnmE and two MnmG subunits. FAD is required as a cofactor.

The protein localises to the cytoplasm. In terms of biological role, NAD-binding protein involved in the addition of a carboxymethylaminomethyl (cmnm) group at the wobble position (U34) of certain tRNAs, forming tRNA-cmnm(5)s(2)U34. This chain is tRNA uridine 5-carboxymethylaminomethyl modification enzyme MnmG, found in Chlamydia abortus (strain DSM 27085 / S26/3) (Chlamydophila abortus).